A 128-amino-acid chain; its full sequence is Entry-fusion complex protein OPG094 (128 aa).

Residues 1–30 lie on the Intravirion side of the membrane; that stretch reads MENVPNVYFNPVFIEPTFKHSLLSVYKHRL. A helical; Signal-anchor for type III membrane protein transmembrane segment spans residues 31 to 51; the sequence is IVLFEVFIVFILIYVFFRSEL. The Virion surface segment spans residues 52-107; it reads NMFFMPKRKIPDPIDRLRRANLACEDDKLMIYGLPWMTTQTSALSINSKPIVYKDC. An intrachain disulfide couples C75 to C107.

This sequence belongs to the orthopoxvirus OPG099 family. Interacts with OPG086. Component of the entry fusion complex (EFC) composed of OPG053, OPG076, OPG086, OPG094, OPG095, OPG099, OPG107, OPG143, OPG104J5, OPG147 and OPG155. Except for OPG095 and OPG053, each of the EFC proteins is required for assembly or stability of the complex. In terms of processing, most cysteines are linked by disulfide bonds. They are created by the viral disulfide bond formation pathway, a poxvirus-specific redox pathway that operates on the cytoplasmic side of the MV membranes. Post-translationally, unglycosylated because produced in viral factories instead of the classic ER -Golgi route.

It localises to the virion membrane. Component of the entry fusion complex (EFC), which consists of 11 proteins. During cell infection, this complex mediates entry of the virion core into the host cytoplasm by a two-step mechanism consisting of lipid mixing of the viral and cellular membranes and subsequent pore formation. The sequence is that of Entry-fusion complex protein OPG094 (OPG099) from Vaccinia virus (strain Ankara) (VACV).